A 260-amino-acid chain; its full sequence is Cytosolic Fe-S cluster assembly factor Nubp2 homolog (260 aa).

14–21 serves as a coordination point for ATP; that stretch reads GKGGVGKS. Positions 188 and 191 each coordinate [4Fe-4S] cluster.

Belongs to the Mrp/NBP35 ATP-binding proteins family. NUBP2/CFD1 subfamily. Heterotetramer of 2 Nubp1 and 2 Nubp2 chains. Requires [4Fe-4S] cluster as cofactor.

Its subcellular location is the cytoplasm. Functionally, component of the cytosolic iron-sulfur (Fe/S) protein assembly (CIA) machinery. Required for maturation of extramitochondrial Fe-S proteins. The Nubp1-Nubp2 heterotetramer forms a Fe-S scaffold complex, mediating the de novo assembly of an Fe-S cluster and its transfer to target apoproteins. The sequence is that of Cytosolic Fe-S cluster assembly factor Nubp2 homolog from Drosophila melanogaster (Fruit fly).